Reading from the N-terminus, the 184-residue chain is MSSARRCLFGRPTPEQRSRTRIWLEDAVKRMRQEESQKWGFDFELETPLPSSAGFVYEVIPENCVPEFYRTKVLTVRTTCSSLDISSTTLTPLSSPSTSDKEEPSLMDPNSSFEDEEEPKKWQFREPPTPRKTPTKRQQKMTDFMAVSRKKNSLSPNKLSPVNVIFTPKSRRPTIRTRSSCSPY.

Positions 85 to 98 (ISSTTLTPLSSPST) are enriched in low complexity. The disordered stretch occupies residues 85–184 (ISSTTLTPLS…IRTRSSCSPY (100 aa)).

The protein belongs to the CDI family. As to quaternary structure, interacts with cyd-1; the interaction is direct. As to expression, in embryos, expression is first seen in pharyngeal primordium and later in all differentiating cells. Post embryonic expression corresponds to developmental patterns of cell cycle progression in many tissues including sex myoblasts, distal tip cells, vulval cells, seam cells, neurons, intestine cells and hypodermal cells.

Its subcellular location is the nucleus. In terms of biological role, negative cell-cycle regulator that functions at the G1-to-S-phase transition. Required for suspension of the cell cycle in dauer larvae and starved L1 larvae. In vulval precursor cells (VPCs), a pathway of heterochronic genes acts via cki-1 to maintain VPCs in G1 during the L2 larval stage. Cul-2 may function in ubiquitin-mediated degradation by targeting cki-1 for degradation. Involved in distal tip cell development by repressing and modulating cye-1/cdk-2 activity levels in Z1.aa/Z4.pp and in Z1.ap/Z4.pa. The sequence is that of Cyclin-dependent kinase inhibitor 1 from Caenorhabditis elegans.